The sequence spans 413 residues: Alpha-1-antitrypsin-like protein GS55-MS (413 aa).

The signal sequence occupies residues 1 to 24; sequence MPSSISWGLLLLAGLSCLVAGSLA. Asn-65, Asn-102, and Asn-266 each carry an N-linked (GlcNAc...) asparagine glycan. The segment at 368 to 387 is RCL; sequence GATFLEMMPMSLPPEVKFDK.

The protein belongs to the serpin family.

It is found in the secreted. Its function is as follows. Inhibitor of serine proteases. Its primary target is elastase, but it also has a moderate affinity for plasmin and thrombin. The chain is Alpha-1-antitrypsin-like protein GS55-MS from Ictidomys tridecemlineatus (Thirteen-lined ground squirrel).